A 526-amino-acid chain; its full sequence is Efflux pump aunC (526 aa).

The next 14 membrane-spanning stretches (helical) occupy residues 23–43, 64–84, 89–109, 125–145, 155–175, 183–203, 218–238, 254–274, 296–316, 339–359, 360–380, 386–406, 418–438, and 491–511; these read LCYK…CTSL, DVGW…LPFG, FFPI…GSFI, VAGL…TQCV, GFIM…GGAF, WCFY…FFTF, AAGL…CLLL, IIAL…LQLW, LYGF…PIWF, VIFA…GPFM, LLSA…HPSS, IGYQ…PVFV, TATA…VSVA, and VHTF…ATVI.

Belongs to the major facilitator superfamily. TCR/Tet family.

Its subcellular location is the cell membrane. Functionally, efflux pump; part of the gene cluster that mediates the biosynthesis of aurasperone B, a dimeric gamma-naphthopyrone. The sequence is that of Efflux pump aunC from Aspergillus niger (strain ATCC 1015 / CBS 113.46 / FGSC A1144 / LSHB Ac4 / NCTC 3858a / NRRL 328 / USDA 3528.7).